The sequence spans 108 residues: Synaptobrevin-1 (108 aa).

Positions 1-25 (MDAQGDAGAQGGSQGPRPSNKRLQQ) are disordered. Residues 1–85 (MDAQGDAGAQ…KRKYWWKNIK (85 aa)) are Cytoplasmic-facing. Residues 22-82 (RLQQTQAQVD…ATLKRKYWWK (61 aa)) enclose the v-SNARE coiled-coil homology domain. Residues 86 to 106 (MMIIMCAIVVILIIIIVLWAG) form a helical; Anchor for type IV membrane protein membrane-spanning segment. At 107–108 (GK) the chain is on the extracellular side.

Belongs to the synaptobrevin family. As to quaternary structure, part of the SNARE core complex containing CBG09569/SNAP25, snb-1/VAMP2 and CBG03570/STX1A. This complex binds to cpx-1/CPLX1.

It is found in the cytoplasmic vesicle. The protein localises to the secretory vesicle. The protein resides in the synaptic vesicle membrane. Its subcellular location is the cell membrane. It localises to the synapse. It is found in the synaptosome. Involved in the targeting and/or fusion of transport vesicles to their target membrane. Acts in neuronal exocytosis of synaptic transmission. Likely to have a role in cholinergic transmisson. Required for viability, coordinated movement and M3 pharynx motor neuron function. The polypeptide is Synaptobrevin-1 (Caenorhabditis briggsae).